A 105-amino-acid polypeptide reads, in one-letter code: MANQVMRITLKAYDHHLIDASAGKIIETVKKTGSKVSGPVPLPTKKEIVTVLRAVHKYKDSREQFEQRTHKRLIDIIAPTQKTVDALSRLEMPAGVYIDIKMKAK.

The protein belongs to the universal ribosomal protein uS10 family. Part of the 30S ribosomal subunit.

Involved in the binding of tRNA to the ribosomes. In Lachnoclostridium phytofermentans (strain ATCC 700394 / DSM 18823 / ISDg) (Clostridium phytofermentans), this protein is Small ribosomal subunit protein uS10.